A 231-amino-acid chain; its full sequence is MDARQMKIKAAEAALEHVESGMRLGIGTGSTAEEFVRLLAEKVASGFQISGVPTSERTARLCLELGVPLKSLDELPELDLTIDGADEVDGKLRLIKGGGGALLREKIVASASTRMIVIADESKVVDVLGAFKLPIEINPFGQVATRLAIEKTASRLGLAGEIVVRSSGDGVFMTDGGHLILDASFGRIPDADALAVELNAIPGVVEHGLFIDVASMAIIAGPEGARTLTAS.

Residues 28 to 31 (TGST), 83 to 86 (DGAD), and 96 to 99 (KGGG) contribute to the substrate site. Catalysis depends on Glu105, which acts as the Proton acceptor. Lys123 lines the substrate pocket.

This sequence belongs to the ribose 5-phosphate isomerase family. As to quaternary structure, homodimer.

It catalyses the reaction aldehydo-D-ribose 5-phosphate = D-ribulose 5-phosphate. Its pathway is carbohydrate degradation; pentose phosphate pathway; D-ribose 5-phosphate from D-ribulose 5-phosphate (non-oxidative stage): step 1/1. Catalyzes the reversible conversion of ribose-5-phosphate to ribulose 5-phosphate. The protein is Ribose-5-phosphate isomerase A of Rhizobium meliloti (strain 1021) (Ensifer meliloti).